The following is a 151-amino-acid chain: Salivary C-type lectin 2 (151 aa).

The signal sequence occupies residues 1-15 (MKLLLSFALLGLVAC). The C-type lectin domain occupies 25 to 147 (YCFPNEVATW…CTSKRRFVCE (123 aa)). 2 cysteine pairs are disulfide-bonded: cysteine 41–cysteine 146 and cysteine 118–cysteine 138.

It depends on Ca(2+) as a cofactor. As to expression, expressed in female salivary gland. Not detected or low-level expression in female midgut and fat body.

The protein localises to the secreted. Salivary protein with carbohydrate-binding activity. Binds to D-mannose, D-galactose, D-glucose and maltose. Agglutinates host erythrocytes. Probably participates in mosquito innate immune responses to prevent microorganism multiplication in sugar and blood meals. In terms of biological role, (Microbial infection) Binds to the surface of and agglutinates Escherichia coli in vitro. Functionally, (Microbial infection) Binds to the surface of and agglutinates Pseudomonas aeruginosa in vitro. Its function is as follows. (Microbial infection) Binds to the surface of and agglutinates Bacillus subtilis in vitro. (Microbial infection) Agglutinates Staphylococcus aureus in vitro. In terms of biological role, (Microbial infection) Agglutinates Candida albicans in vitro. Functionally, (Microbial infection) Does not affect replication of dengue virus type 2 in host cells. This Aedes albopictus (Asian tiger mosquito) protein is Salivary C-type lectin 2.